We begin with the raw amino-acid sequence, 604 residues long: Zinc finger protein chinmo (604 aa).

The region spanning 32–98 is the BTB domain; it reads ADVILSCDGV…MYKGEVHVSQ (67 aa). Disordered stretches follow at residues 122 to 155, 291 to 310, 330 to 437, and 450 to 470; these read RLAA…SGGS, CDSL…GYTH, RSPY…DEST, and NLKY…TPNT. The segment covering 364-374 has biased composition (low complexity); that stretch reads PSSSASSTAPT. A compositionally biased stretch (polar residues) spans 384-409; sequence ASPQSSRYENHSPSTTAGNGNATSSL. Acidic residues predominate over residues 425–437; the sequence is ANDDDRELMDEST. Over residues 461–470 the composition is skewed to low complexity; the sequence is SNTSSTTPNT. 2 consecutive C2H2-type zinc fingers follow at residues 517–540 and 545–568; these read LKCL…RQRH and VPCP…AREH.

In terms of tissue distribution, broadly expressed in the developing larval central nervous system (at protein level). Expressed in the larval lymph gland and circulating hemocytes (at protein level). Expressed in all cell types of the adult testis stem cell niche but not detected in somatic cells of the adult ovary (at protein level). In the testis, expressed at high levels in cyst stem cells and early cyst cells and, at lower levels, in germline stem cells (at protein level).

It is found in the nucleus. Functionally, required for morphological differentiation of postmitotic neurons during postembryonic brain development. Ensures production of appropriate neuron subtypes within a lineage by preventing precocious generation of late neuronal types of that lineage. Acts as a downstream mediator of the transcriptional activator Stat92e and is required for the development of the eye-antennal disk which gives rise to the adult eye, antenna and head capsule, for transcriptional repression of the Notch receptor ligand Ser and for the self-renewal of cyst stem cells in the testis. In the adult testis, maintains the male identify of adult somatic cyst stem cells. Represses expression and alternative splicing of transformer pre-mRNA, resulting in the production of the male-specific isoform of transcription factor dsx which ensures male-specific transcription of target genes. Plays a role in actin nuclear localization through its involvement in repressing the expression of the kinase Cdi. This maintains the cofilin/actin-depolymerizing factor homolog tsr in its unphosphorylated state which is required for actin nuclear import. This chain is Zinc finger protein chinmo, found in Drosophila melanogaster (Fruit fly).